Reading from the N-terminus, the 170-residue chain is Probable peptide methionine sulfoxide reductase (170 aa).

Belongs to the MsrA Met sulfoxide reductase family.

The protein localises to the cytoplasm. It is found in the nucleus. The enzyme catalyses L-methionyl-[protein] + [thioredoxin]-disulfide + H2O = L-methionyl-(S)-S-oxide-[protein] + [thioredoxin]-dithiol. It carries out the reaction [thioredoxin]-disulfide + L-methionine + H2O = L-methionine (S)-S-oxide + [thioredoxin]-dithiol. Has an important function as a repair enzyme for proteins that have been inactivated by oxidation. Catalyzes the reversible oxidation-reduction of methionine sulfoxide in proteins to methionine. The sequence is that of Probable peptide methionine sulfoxide reductase (mxr1) from Schizosaccharomyces pombe (strain 972 / ATCC 24843) (Fission yeast).